We begin with the raw amino-acid sequence, 243 residues long: Sec-independent protein translocase protein TATB, chloroplastic (243 aa).

The transit peptide at 1–67 directs the protein to the chloroplast; that stretch reads MTPTANLLLP…SRTRRRNVIC (67 aa). Residues 68–69 are Lumenal-facing; it reads AS. A helical membrane pass occupies residues 70–90; sequence LFGVGAPEALVIGVVALLVFG. Over 91-243 the chain is Stromal; it reads PKGLAEVARN…NKSQKAEGER (153 aa). Disordered stretches follow at residues 129–165 and 178–243; these read EIGI…PAPY and IAAS…EGER. Polar residues-rich tracts occupy residues 135–152 and 187–204; these read VSQS…NQQP and NPQQ…PTTP.

Belongs to the TatB family. As to quaternary structure, in thylakoid membranes, TATC and TATB form a large receptor complex, containing about eight TATC-TATB pairs, which binds the precursor protein. Twin arginine signal peptide promotes pH-triggered docking of TATA oligomers to TATC-TATB receptor complex, inducing a conformational switch of TATA that results in activation of the translocase. TATA dissociates from TATC-TATB upon completion of translocation.

The protein resides in the plastid. It is found in the chloroplast thylakoid membrane. In terms of biological role, part of the twin-arginine translocation (Tat) system that transports large folded proteins containing a characteristic twin-arginine motif in their signal peptide across the thylakoid membrane. Involved in delta pH-dependent protein transport required for chloroplast development, especially thylakoid membrane formation. TATC and TATB mediate precursor recognition, whereas TATA facilitates translocation. This Zea mays (Maize) protein is Sec-independent protein translocase protein TATB, chloroplastic.